A 360-amino-acid polypeptide reads, in one-letter code: Peptide chain release factor 1 (360 aa).

The residue at position 235 (Gln235) is an N5-methylglutamine. The interval 284-313 (AKRQQAEASTRRNLLGSGDRSDRNRTYNFP) is disordered.

This sequence belongs to the prokaryotic/mitochondrial release factor family. Post-translationally, methylated by PrmC. Methylation increases the termination efficiency of RF1.

Its subcellular location is the cytoplasm. Its function is as follows. Peptide chain release factor 1 directs the termination of translation in response to the peptide chain termination codons UAG and UAA. The chain is Peptide chain release factor 1 from Salmonella gallinarum (strain 287/91 / NCTC 13346).